Here is a 533-residue protein sequence, read N- to C-terminus: NAD(P)H-quinone oxidoreductase chain 4 2 (533 aa).

14 helical membrane passes run 5–25, 33–53, 86–106, 114–134, 135–155, 168–188, 208–228, 242–262, 276–296, 310–330, 331–351, 384–404, 416–436, and 462–482; these read FPWL…IPVL, VRWY…MVFW, LAVP…FAAW, LFYF…AAQD, LILF…LISI, FILY…GMAF, ALEL…LPIF, SAPV…YGLI, FAPV…LTAF, ISHM…GLNG, AMLQ…LAGV, ASLA…FLGL, VGVI…LLSM, and TFIA…PKVA.

This sequence belongs to the complex I subunit 4 family.

The protein localises to the cellular thylakoid membrane. The enzyme catalyses a plastoquinone + NADH + (n+1) H(+)(in) = a plastoquinol + NAD(+) + n H(+)(out). The catalysed reaction is a plastoquinone + NADPH + (n+1) H(+)(in) = a plastoquinol + NADP(+) + n H(+)(out). In terms of biological role, NDH-1 shuttles electrons from NAD(P)H, via FMN and iron-sulfur (Fe-S) centers, to quinones in the respiratory chain. The immediate electron acceptor for the enzyme in this species is believed to be plastoquinone. Couples the redox reaction to proton translocation (for every two electrons transferred, four hydrogen ions are translocated across the cytoplasmic membrane), and thus conserves the redox energy in a proton gradient. This is NAD(P)H-quinone oxidoreductase chain 4 2 from Thermosynechococcus vestitus (strain NIES-2133 / IAM M-273 / BP-1).